Reading from the N-terminus, the 155-residue chain is Cell division protein SepF (155 aa).

Acidic residues predominate over residues T16 to E35. The tract at residues T16–Q44 is disordered.

This sequence belongs to the SepF family. Homodimer. Interacts with FtsZ.

The protein resides in the cytoplasm. Functionally, cell division protein that is part of the divisome complex and is recruited early to the Z-ring. Probably stimulates Z-ring formation, perhaps through the cross-linking of FtsZ protofilaments. Its function overlaps with FtsA. This Acetivibrio thermocellus (strain ATCC 27405 / DSM 1237 / JCM 9322 / NBRC 103400 / NCIMB 10682 / NRRL B-4536 / VPI 7372) (Clostridium thermocellum) protein is Cell division protein SepF.